Here is a 913-residue protein sequence, read N- to C-terminus: MANASKTQIIDYEGHIIDDLKEWMSDNGLSKLGFNYNVIAILGSQSSGKSTLLNNLFKTSFEVMNTKLGHSQTTQGLWLSYDKFEDELAGGSSEGTDAESKNKSGDKPVVNPTLILDVEGNDSKERGENRLTFEHRSALFSLALADCVIVNLWYHSLGNFTASNYGLLKTVMEVHLELFHQNVNCPKTILMFTVRDWFEEFAPLDVIREKIIEEYVNKIWQELKKPKSSKNAKVDDYFIIEVVGLSHGIIKKDEFLKDIKRLRHRWVYELRPVNYSRNIPADGFAQYCHNIWNTIVKQSQLDIPSQQEMLATFRCQEIKNNVLNSISGMIKEKIIDSKNRYIENFKTWAETDIIEKSVNEYLIDASRYQRSICLKTLEELLEAIFIQLQTIVDNNLNYTQRILSSKFSKELNSMYSVCTTDKGYFLLSSDKNADATEQDDNLSNMDKSGESAKKGNQSKCINLWSNFLYNADMLEYTTISNFYDQYKKCTIEIVEGSMASNESKDSQEKKNHDFNYKNSLTILATSIYKDTNRIRSVQCNILIERIRATIKEELKNVDNMLVTVKCSKDYWDYILKVTNKLEDYIYTNLSKCFVNLKIGINTTHLNNGDNIYARLNTNSDYGFVYSHNDHMYDFSDDENNNFDEIDTEIDQSKNDMESLFNSKKFEIITKQNKKEKYVSSINNDLTKEMNNKKLILELKNFYIEIIIDALKIKLDEISNDIANVIINRFESVFNYDEIEQPRQWRNVSVVELKNIFRVSKDYAFLIVEILQKNIKIDKLDKHLPNNFINTDIIEKGKSKAKKRIQEICRDAQYIQETGGQMSLKNVPFAFWVILLILGWNEILMFTRLFFRLNIILPMFMAFIIIVGSCLYTGNAQVLSYLNKIAFIVIKHSYNFYKHLQTVGNQPTKPEKVD.

At methionine 1–asparagine 825 the chain is on the cytoplasmic side. Residues glycine 33–cysteine 288 form the GB1/RHD3-type G domain. Glycine 43–serine 50 is a GTP binding site. Disordered stretches follow at residues alanine 89–proline 108 and threonine 436–glycine 455. Coiled-coil stretches lie at residues aspartate 636 to leucine 659 and isoleucine 703 to asparagine 727. A helical membrane pass occupies residues valine 826–threonine 846. Residues arginine 847–phenylalanine 849 lie on the Lumenal side of the membrane. A helical transmembrane segment spans residues phenylalanine 850–leucine 870. At tyrosine 871 to aspartate 913 the chain is on the cytoplasmic side.

It belongs to the TRAFAC class dynamin-like GTPase superfamily. GB1/RHD3 GTPase family. RHD3 subfamily.

The protein localises to the endoplasmic reticulum membrane. Functionally, probable GTP-binding protein involved in generating and maintaining the structure of the tubular endoplasmic reticulum network. This is Protein SEY1 homolog from Plasmodium chabaudi chabaudi.